The sequence spans 336 residues: F-box protein At5g50450 (336 aa).

The 52-residue stretch at 19 to 70 folds into the F-box domain; the sequence is NNHFEDLHDDLIISILRKLATSASSPSDFLTVLSTCKRLNRLGLHPLVLSKA. Zn(2+) is bound by residues His263, Cys266, Cys279, Cys282, Cys288, Cys292, His301, and Cys305. An MYND-type; atypical zinc finger spans residues 263-305; that stretch reads HGGCGRPETRAHEFRRCSVCGKVNYCSRGCQALDWRAKHKVEC.

The polypeptide is F-box protein At5g50450 (Arabidopsis thaliana (Mouse-ear cress)).